The primary structure comprises 171 residues: ATP synthase subunit b (171 aa).

Residues 19–39 form a helical membrane-spanning segment; sequence VGVGLILFIAIVIWAKAPAMI.

This sequence belongs to the ATPase B chain family. In terms of assembly, F-type ATPases have 2 components, F(1) - the catalytic core - and F(0) - the membrane proton channel. F(1) has five subunits: alpha(3), beta(3), gamma(1), delta(1), epsilon(1). F(0) has three main subunits: a(1), b(2) and c(10-14). The alpha and beta chains form an alternating ring which encloses part of the gamma chain. F(1) is attached to F(0) by a central stalk formed by the gamma and epsilon chains, while a peripheral stalk is formed by the delta and b chains.

The protein localises to the cell inner membrane. Its function is as follows. F(1)F(0) ATP synthase produces ATP from ADP in the presence of a proton or sodium gradient. F-type ATPases consist of two structural domains, F(1) containing the extramembraneous catalytic core and F(0) containing the membrane proton channel, linked together by a central stalk and a peripheral stalk. During catalysis, ATP synthesis in the catalytic domain of F(1) is coupled via a rotary mechanism of the central stalk subunits to proton translocation. Component of the F(0) channel, it forms part of the peripheral stalk, linking F(1) to F(0). In Caulobacter sp. (strain K31), this protein is ATP synthase subunit b.